A 445-amino-acid chain; its full sequence is Argininosuccinate synthase (445 aa).

ATP contacts are provided by residues 17 to 25 and alanine 43; that span reads AFSGGLDTS. Tyrosine 99 contributes to the L-citrulline binding site. Glycine 129 and threonine 131 together coordinate ATP. Residues threonine 131, asparagine 135, and aspartate 136 each coordinate L-aspartate. Asparagine 135 lines the L-citrulline pocket. Aspartate 136 is a binding site for ATP. Positions 139 and 192 each coordinate L-citrulline. Aspartate 194 is a binding site for ATP. L-citrulline contacts are provided by threonine 201, glutamate 203, and glutamate 280.

The protein belongs to the argininosuccinate synthase family. Type 2 subfamily. Homotetramer.

The protein localises to the cytoplasm. The enzyme catalyses L-citrulline + L-aspartate + ATP = 2-(N(omega)-L-arginino)succinate + AMP + diphosphate + H(+). It functions in the pathway amino-acid biosynthesis; L-arginine biosynthesis; L-arginine from L-ornithine and carbamoyl phosphate: step 2/3. The sequence is that of Argininosuccinate synthase from Polaromonas naphthalenivorans (strain CJ2).